Consider the following 2137-residue polypeptide: Pecanex-like protein 2 (2137 aa).

A run of 2 helical transmembrane segments spans residues 34–54 (CHLY…LAFP) and 57–77 (AIIV…IKLV). 4 disordered regions span residues 92-163 (QQKP…LELS), 225-251 (NGKG…VDKG), 402-530 (EKTS…HARV), and 545-572 (SAEI…QMPN). Residues 96–114 (SRKEEKPNKDKEAKGEHIT) are compositionally biased toward basic and acidic residues. The segment covering 116–125 (HRNPSNNRQI) has biased composition (polar residues). The N-linked (GlcNAc...) asparagine glycan is linked to asparagine 136. A compositionally biased stretch (polar residues) spans 146 to 156 (SRGQSITSHHS). The N-linked (GlcNAc...) asparagine glycan is linked to asparagine 449. The segment covering 479–490 (IKDHSSSSREPW) has biased composition (basic and acidic residues). A compositionally biased stretch (polar residues) spans 510–520 (GQTNLDPSSCK). N-linked (GlcNAc...) asparagine glycans are attached at residues asparagine 550, asparagine 572, asparagine 587, asparagine 598, and asparagine 613. A compositionally biased stretch (polar residues) spans 593–602 (ASSQLNGSAE). The segment at 593–612 (ASSQLNGSAEQNEESGLLRD) is disordered. 2 disordered regions span residues 621 to 655 (EILE…CTQP) and 740 to 763 (AREM…SGDP). Over residues 630–655 (GHSSKQGKPDLQSQDHTSTGPACTQP) the composition is skewed to polar residues. Positions 746–760 (SSSSTTTSESQDPSS) are enriched in low complexity. Transmembrane regions (helical) follow at residues 844-864 (LAIL…SQGF), 868-888 (MWVL…LKSV), 901-921 (QIIT…ILLL), 952-972 (YLIV…FPQI), 983-1003 (IDML…VYSV), 1029-1049 (HIPA…YHLS), 1099-1119 (LIVC…TVFL), 1124-1144 (FLSI…HYVL), 1193-1213 (YILY…LISN), 1237-1257 (SFCN…FFHF), 1265-1285 (SFLL…DLLH), 1302-1322 (GSSF…MLFF), and 1324-1344 (TIAT…VIFI). Residues asparagine 1412, asparagine 1553, and asparagine 1818 are each glycosylated (N-linked (GlcNAc...) asparagine). Residues 1876-1958 (RQHSGGNIED…RPPMLSSSGP (83 aa)) are disordered. Polar residues-rich tracts occupy residues 1901-1910 (SGGSQESSAE), 1920-1929 (GVSSCEGTQR), and 1937-1958 (SQSV…SSGP). Asparagine 2054 carries an N-linked (GlcNAc...) asparagine glycan.

This sequence belongs to the pecanex family.

It is found in the membrane. In terms of biological role, may play a role in tumorigenesis of colorectal carcinomas with high microsatellite instability (MSI-H). The protein is Pecanex-like protein 2 of Homo sapiens (Human).